The sequence spans 104 residues: MKATIKTQGQQFTVSEGDILTVNRYPNTEAGATVEISEVLATGEGENFRVGTPTLAGAIVSAKILENKRGEKVIVFKKRKRKGMERKRGHRQELSVIKIESIKV.

It belongs to the bacterial ribosomal protein bL21 family. As to quaternary structure, part of the 50S ribosomal subunit. Contacts protein L20.

Functionally, this protein binds to 23S rRNA in the presence of protein L20. The polypeptide is Large ribosomal subunit protein bL21 (Opitutus terrae (strain DSM 11246 / JCM 15787 / PB90-1)).